The primary structure comprises 307 residues: tRNA pseudouridine synthase B (307 aa).

Asp39 acts as the Nucleophile in catalysis.

The protein belongs to the pseudouridine synthase TruB family. Type 1 subfamily.

The catalysed reaction is uridine(55) in tRNA = pseudouridine(55) in tRNA. Responsible for synthesis of pseudouridine from uracil-55 in the psi GC loop of transfer RNAs. This Lactiplantibacillus plantarum (strain ATCC BAA-793 / NCIMB 8826 / WCFS1) (Lactobacillus plantarum) protein is tRNA pseudouridine synthase B.